Here is a 115-residue protein sequence, read N- to C-terminus: MNMLMVMLVNITLSSCLIMIAFWLPQLNLYTEKANPYECGFDPMSSARLPFSMKFFLVAITFFLFDLEIALLLPLPWAIQMYNINTMMLTAFILVSVLALGLAYEWMQKGLEWTE.

3 helical membrane passes run 4-24 (LMVM…AFWL), 55-75 (FFLV…LLPL), and 87-107 (MMLT…YEWM).

It belongs to the complex I subunit 3 family. Core subunit of respiratory chain NADH dehydrogenase (Complex I) which is composed of 45 different subunits. Interacts with TMEM186. Interacts with TMEM242.

The protein localises to the mitochondrion inner membrane. The enzyme catalyses a ubiquinone + NADH + 5 H(+)(in) = a ubiquinol + NAD(+) + 4 H(+)(out). Core subunit of the mitochondrial membrane respiratory chain NADH dehydrogenase (Complex I) which catalyzes electron transfer from NADH through the respiratory chain, using ubiquinone as an electron acceptor. Essential for the catalytic activity of complex I. The protein is NADH-ubiquinone oxidoreductase chain 3 of Peromyscus mexicanus (Mexican deer mouse).